A 610-amino-acid polypeptide reads, in one-letter code: 1,8-cineol synthase, chloroplastic (610 aa).

The transit peptide at 1-51 (MNHHLIITPIFHLQIMLPVATLKRPPPPAATCSIYSFSRGTPSLVSKARLS) directs the protein to the chloroplast. The (2E)-geranyl diphosphate site is built by Arg322, Asp359, Asp363, Arg500, and Asn503. The Mg(2+) site is built by Asp359 and Asp363. The DDXXD motif signature appears at 359–363 (DDVYD). Positions 503, 507, and 511 each coordinate Mg(2+).

It belongs to the terpene synthase family. Tpsb subfamily. In terms of assembly, monomer. Mg(2+) is required as a cofactor. Requires Mn(2+) as cofactor. Confined to buds and flowers.

The protein resides in the plastid. It is found in the chloroplast. It carries out the reaction (2E)-geranyl diphosphate + H2O = 1,8-cineole + diphosphate. The catalysed reaction is (2E)-geranyl diphosphate = limonene + diphosphate. It catalyses the reaction (2E)-geranyl diphosphate = sabinene + diphosphate. The enzyme catalyses (2E)-geranyl diphosphate = (E)-beta-ocimene + diphosphate. It carries out the reaction (2E)-geranyl diphosphate = beta-myrcene + diphosphate. The catalysed reaction is (2E)-geranyl diphosphate = alpha-pinene + diphosphate. It catalyses the reaction (2E)-geranyl diphosphate + H2O = (S)-alpha-terpineol + diphosphate. It functions in the pathway secondary metabolite biosynthesis; terpenoid biosynthesis. Functionally, monoterpene synthase involved in the biosynthesis of monoterpene natural products of the 'cineole cassette', volatile compounds present in floral scent. Catalyzes the conversion of (2E)-geranyl diphosphate (GPP) into 1,8-cineole and, as minor products, limonene, sabinene, (E)-beta-ocimene, beta-myrcene, alpha-pinene and alpha-terpineol. The chain is 1,8-cineol synthase, chloroplastic from Nicotiana suaveolens (Australian tobacco).